A 146-amino-acid polypeptide reads, in one-letter code: Large ribosomal subunit protein uL15 (146 aa).

Over residues 1-18 the composition is skewed to basic and acidic residues; sequence MKLHELKPSEGSRKERNR. The tract at residues 1 to 57 is disordered; sequence MKLHELKPSEGSRKERNRVGRGIGSGNGKTSGKGHKGQNARSGGGVRPGFEGGQMPL. 2 stretches are compositionally biased toward gly residues: residues 21–31 and 42–52; these read RGIGSGNGKTS and SGGGVRPGFEG.

Belongs to the universal ribosomal protein uL15 family. As to quaternary structure, part of the 50S ribosomal subunit.

Binds to the 23S rRNA. The protein is Large ribosomal subunit protein uL15 of Bacillus pumilus (strain SAFR-032).